A 574-amino-acid chain; its full sequence is Serine/threonine-protein kinase fray1 (574 aa).

Residues 24-41 are compositionally biased toward basic and acidic residues; sequence NHHDLPDSDSDSSSREEE. A disordered region spans residues 24–64; it reads NHHDLPDSDSDSSSREEELMNSSGGGNGKEPIGEKKKLPSH. Residues 97-357 form the Protein kinase domain; that stretch reads YNLIEPIGEG…ASKLLEHKVF (261 aa). Residues 103-111 and Lys-126 contribute to the ATP site; that span reads IGEGTEGRV. The Proton acceptor role is filled by Asp-221. The residue at position 256 (Thr-256) is a Phosphothreonine; by autocatalysis. Disordered stretches follow at residues 381–447, 462–514, and 532–554; these read YRES…LVNM, LSSG…PEKE, and FGSPKEGDHNHQHHKSEGDHEHH. Low complexity-rich tracts occupy residues 386-403, 418-441, and 462-475; these read SPASSNTPSPDSSRPSSP, KNIKPSSLNKSSSSLELKNKNLSN, and LSSGSGPLSQSSDL. Residues 478–491 show a composition bias toward basic residues; sequence GHLHKIGTPKKKHS. A compositionally biased stretch (low complexity) spans 492 to 506; that stretch reads PSGSIGDSHGSISPP. Residues 536 to 553 are compositionally biased toward basic and acidic residues; sequence KEGDHNHQHHKSEGDHEH.

The protein belongs to the protein kinase superfamily. STE Ser/Thr protein kinase family. STE20 subfamily. Requires Mn(2+) as cofactor. In terms of processing, undergoes autophosphorylation in the catalytic domain.

It catalyses the reaction L-seryl-[protein] + ATP = O-phospho-L-seryl-[protein] + ADP + H(+). It carries out the reaction L-threonyl-[protein] + ATP = O-phospho-L-threonyl-[protein] + ADP + H(+). The protein is Serine/threonine-protein kinase fray1 of Dictyostelium discoideum (Social amoeba).